A 396-amino-acid chain; its full sequence is Dual specificity mitogen-activated protein kinase kinase dSOR1 (396 aa).

A disordered region spans residues 25–44 (APTPPFKTPSGTDTHSLLGK). One can recognise a Protein kinase domain in the interval 87-364 (LEKLGELGSG…LKTLLSHPWI (278 aa)). ATP is bound by residues 93–101 (LGSGNGGVV) and Lys116. The Proton acceptor role is filled by Asp209. Residues Ser237 and Ser241 each carry the phosphoserine; by RAF modification.

This sequence belongs to the protein kinase superfamily. STE Ser/Thr protein kinase family. MAP kinase kinase subfamily. Interacts with Raf and ksr; Dsor1 binding to ksr probably promotes ksr and Raf dimerization and ksr-mediated Raf transactivation. Post-translationally, phosphorylation on Ser/Thr by MAP kinase kinase kinases regulates positively the kinase activity.

The enzyme catalyses L-seryl-[protein] + ATP = O-phospho-L-seryl-[protein] + ADP + H(+). It carries out the reaction L-threonyl-[protein] + ATP = O-phospho-L-threonyl-[protein] + ADP + H(+). It catalyses the reaction L-tyrosyl-[protein] + ATP = O-phospho-L-tyrosyl-[protein] + ADP + H(+). In terms of biological role, required downstream of Raf in the sevenless (sev), torso (tor), and Drosophila EGF receptor homolog (DER) signal transduction pathways. Involved in both positive regulation (at the posterior terminus) and negative regulation (at the anterior domain) of tll, as in other terminal class gene products, maybe via the ERK-A kinase. This Drosophila melanogaster (Fruit fly) protein is Dual specificity mitogen-activated protein kinase kinase dSOR1 (Dsor1).